Here is a 208-residue protein sequence, read N- to C-terminus: Uracil phosphoribosyltransferase (208 aa).

Residues Arg78, Arg103, and Asp130–Ser138 each bind 5-phospho-alpha-D-ribose 1-diphosphate. Uracil-binding positions include Ile193 and Gly198–Ala200. Asp199 lines the 5-phospho-alpha-D-ribose 1-diphosphate pocket.

It belongs to the UPRTase family. Mg(2+) is required as a cofactor.

The catalysed reaction is UMP + diphosphate = 5-phospho-alpha-D-ribose 1-diphosphate + uracil. The protein operates within pyrimidine metabolism; UMP biosynthesis via salvage pathway; UMP from uracil: step 1/1. Allosterically activated by GTP. Its function is as follows. Catalyzes the conversion of uracil and 5-phospho-alpha-D-ribose 1-diphosphate (PRPP) to UMP and diphosphate. This chain is Uracil phosphoribosyltransferase, found in Thermosipho melanesiensis (strain DSM 12029 / CIP 104789 / BI429).